A 547-amino-acid chain; its full sequence is Glucose-6-phosphate isomerase (547 aa).

E354 (proton donor) is an active-site residue. Catalysis depends on residues H385 and K513.

This sequence belongs to the GPI family.

The protein localises to the cytoplasm. The catalysed reaction is alpha-D-glucose 6-phosphate = beta-D-fructose 6-phosphate. It participates in carbohydrate biosynthesis; gluconeogenesis. It functions in the pathway carbohydrate degradation; glycolysis; D-glyceraldehyde 3-phosphate and glycerone phosphate from D-glucose: step 2/4. Functionally, catalyzes the reversible isomerization of glucose-6-phosphate to fructose-6-phosphate. In Endomicrobium trichonymphae, this protein is Glucose-6-phosphate isomerase.